A 193-amino-acid chain; its full sequence is 7-methyl-GTP pyrophosphatase (193 aa).

Asp70 acts as the Proton acceptor in catalysis.

Belongs to the Maf family. YceF subfamily. A divalent metal cation serves as cofactor.

It localises to the cytoplasm. The catalysed reaction is N(7)-methyl-GTP + H2O = N(7)-methyl-GMP + diphosphate + H(+). Nucleoside triphosphate pyrophosphatase that hydrolyzes 7-methyl-GTP (m(7)GTP). May have a dual role in cell division arrest and in preventing the incorporation of modified nucleotides into cellular nucleic acids. The sequence is that of 7-methyl-GTP pyrophosphatase from Vibrio cholerae serotype O1 (strain ATCC 39315 / El Tor Inaba N16961).